A 235-amino-acid polypeptide reads, in one-letter code: Proteasome subunit beta type-1 (235 aa).

Residues 1-20 (MSRLGFEQFPDYQVPGMKHP) constitute a propeptide that is removed on maturation.

It belongs to the peptidase T1B family. In terms of assembly, the 26S proteasome consists of a 20S proteasome core and two 19S regulatory subunits. The 20S proteasome core is composed of 28 subunits that are arranged in four stacked rings, resulting in a barrel-shaped structure. The two end rings are each formed by seven alpha subunits, and the two central rings are each formed by seven beta subunits. The catalytic chamber with the active sites is on the inside of the barrel.

The protein resides in the cytoplasm. Its subcellular location is the nucleus. Its function is as follows. Non-catalytic component of the proteasome, a multicatalytic proteinase complex which is characterized by its ability to cleave peptides with Arg, Phe, Tyr, Leu, and Glu adjacent to the leaving group at neutral or slightly basic pH. The proteasome has an ATP-dependent proteolytic activity. The chain is Proteasome subunit beta type-1 (Prosbeta6) from Drosophila melanogaster (Fruit fly).